Consider the following 242-residue polypeptide: Outer membrane protein class 4 (242 aa).

The first 22 residues, 1–22, serve as a signal peptide directing secretion; it reads MTKQLKLSALFVALLASGTAVA. Tandem repeats lie at residues 69-70, 71-72, 73-74, 75-76, 77-78, 79-80, and 81-82. The 7 X 2 AA tandem repeats of X-P stretch occupies residues 69 to 82; it reads APEPEPEPEPAPAP. The OmpA-like domain occupies 92-229; the sequence is YVDETISLSA…RVDVKIRSIV (138 aa). A disulfide bond links Cys191 and Cys214.

Belongs to the outer membrane OOP (TC 1.B.6) superfamily.

The protein localises to the cell outer membrane. The protein is Outer membrane protein class 4 (rmpM) of Neisseria meningitidis serogroup A / serotype 4A (strain DSM 15465 / Z2491).